Reading from the N-terminus, the 194-residue chain is Imidazoleglycerol-phosphate dehydratase (194 aa).

Belongs to the imidazoleglycerol-phosphate dehydratase family.

The protein resides in the cytoplasm. The catalysed reaction is D-erythro-1-(imidazol-4-yl)glycerol 3-phosphate = 3-(imidazol-4-yl)-2-oxopropyl phosphate + H2O. It functions in the pathway amino-acid biosynthesis; L-histidine biosynthesis; L-histidine from 5-phospho-alpha-D-ribose 1-diphosphate: step 6/9. This chain is Imidazoleglycerol-phosphate dehydratase, found in Bacillus anthracis (strain A0248).